Reading from the N-terminus, the 450-residue chain is D-inositol 3-phosphate glycosyltransferase (450 aa).

H21 contributes to the 1D-myo-inositol 3-phosphate binding site. UDP-N-acetyl-alpha-D-glucosamine-binding positions include 27-28 and G35; that span reads QP. Residues 32 to 37, K90, Y123, T147, and R167 contribute to the 1D-myo-inositol 3-phosphate site; that span reads DAGGMN. The UDP-N-acetyl-alpha-D-glucosamine site is built by R241, K246, and V307. Residues Y316, R317, and A319 each coordinate Mg(2+). UDP-N-acetyl-alpha-D-glucosamine-binding residues include E329 and E337. T343 contributes to the Mg(2+) binding site.

This sequence belongs to the glycosyltransferase group 1 family. MshA subfamily. Homodimer.

The catalysed reaction is 1D-myo-inositol 3-phosphate + UDP-N-acetyl-alpha-D-glucosamine = 1D-myo-inositol 2-acetamido-2-deoxy-alpha-D-glucopyranoside 3-phosphate + UDP + H(+). Catalyzes the transfer of a N-acetyl-glucosamine moiety to 1D-myo-inositol 3-phosphate to produce 1D-myo-inositol 2-acetamido-2-deoxy-glucopyranoside 3-phosphate in the mycothiol biosynthesis pathway. The protein is D-inositol 3-phosphate glycosyltransferase of Geodermatophilus obscurus (strain ATCC 25078 / DSM 43160 / JCM 3152 / CCUG 61914 / KCC A-0152 / KCTC 9177 / NBRC 13315 / NRRL B-3577 / G-20).